Reading from the N-terminus, the 433-residue chain is Legumain (433 aa).

A signal peptide spans M1–A17. N91 is a glycosylation site (N-linked (GlcNAc...) asparagine). H148 is a catalytic residue. N167 is a glycosylation site (N-linked (GlcNAc...) asparagine). Residue C189 is the Nucleophile of the active site. 2 N-linked (GlcNAc...) asparagine glycosylation sites follow: N263 and N272. Residues D324–Y433 constitute a propeptide that is removed on maturation. 2 cysteine pairs are disulfide-bonded: C378–C412 and C390–C429.

The protein belongs to the peptidase C13 family. Homodimer before autocatalytic removal of the propeptide. Monomer after autocatalytic processing. May interact with integrins. Post-translationally, activated by autocatalytic processing at pH 4.

The protein localises to the lysosome. The enzyme catalyses Hydrolysis of proteins and small molecule substrates at -Asn-|-Xaa- bonds.. Its function is as follows. Has a strict specificity for hydrolysis of asparaginyl bonds. Can also cleave aspartyl bonds slowly, especially under acidic conditions. Involved in the processing of proteins for MHC class II antigen presentation in the lysosomal/endosomal system. Also involved in MHC class I antigen presentation in cross-presenting dendritic cells by mediating cleavage and maturation of Perforin-2 (MPEG1), thereby promoting antigen translocation in the cytosol. Required for normal lysosomal protein degradation in renal proximal tubules. Required for normal degradation of internalized EGFR. Plays a role in the regulation of cell proliferation via its role in EGFR degradation. This chain is Legumain (LGMN), found in Pongo abelii (Sumatran orangutan).